The sequence spans 196 residues: Probable splicing factor, arginine/serine-rich 4 (196 aa).

An RRM domain is found at 19 to 97; the sequence is TSLKIDNLSY…RELRVTLAKY (79 aa). The segment covering 91 to 106 has biased composition (basic and acidic residues); sequence RVTLAKYDRPSDERGG. Residues 91 to 196 form a disordered region; that stretch reads RVTLAKYDRP…SPSRSRSNSR (106 aa). The segment covering 112–141 has biased composition (basic residues); it reads GRRRSRSPRRRSRSPRYSRSRSPRRSRSRT. Composition is skewed to basic and acidic residues over residues 145–160 and 167–176; these read PSRD…DNSR and PPREDGSPKE. A compositionally biased stretch (low complexity) spans 184-196; sequence ASRSPSRSRSNSR.

The protein belongs to the splicing factor SR family. Post-translationally, extensively phosphorylated on serine residues in the RS domain.

It is found in the nucleus. In terms of biological role, may play a functionally redundant role in embryogenesis. This chain is Probable splicing factor, arginine/serine-rich 4 (rsp-4), found in Caenorhabditis elegans.